Consider the following 413-residue polypeptide: MAYVSMGEAHRRITEYLNRFCDAVSYQDSSTLCRLLSFSSNSPPLLSLADALNVFQDSSSLIRQSDRFSEYGEILAHVFRSLQSYRVGNLVEAYLAFDKFANAFVQEFRNWESAWALEALYVVCYEIRVLAEKADKDLTSNGKSPEKLKAAGSLLMKVFGVLAGKGPKRVGALYVTCQLFKTYFKLGTVNLCRSVIRSIETARIFDFEEFPRRDKVTYMYYTGRLEVFNENFPAADTKLSYALQNCNPKRERNIRMILKYLVPVKLSLGIIPKDELLRNYNLHEYTKIVQALRKGDLRLLRHALQEHEDRFLRSGVYLVLEKLELQVYQRLMKKIYINQKLSDPARAHQLKLEGIAKALRWLDMDMDLDEVECIMTILIYKNLVKGYLAHKSKVVVLSKQDPFPKLNGKPVSS.

In terms of domain architecture, PCI spans 216–402 (VTYMYYTGRL…KVVVLSKQDP (187 aa)).

As to quaternary structure, interacts with EIN2 (via C-terminus). May also interact weakly with CSN8. Interacts with DSS1(V), AMPD, SAC3A, SAC3B and At5g61290 (AC Q9FLK4). Interacts with UCH1 and UCH2. Interacts with NUP1, anchoring the TREX-2 complex on the nuclear pore complex. Expressed at low levels in roots, leaves, stems and shoots. Detected in seedlings, roots, leaves and anthers.

The protein resides in the nucleus. Involved in the regulation of ethylene response. Probable TREX-2 component required for nuclear RNA export. The TREX-2 complex (transcription and export complex 2) functions in docking export-competent ribonucleoprotein particles (mRNPs) to the nuclear entrance of the nuclear pore complex (nuclear basket). TREX-2 participates in mRNA export and accurate chromatin positioning in the nucleus by tethering genes to the nuclear periphery. The chain is Enhanced ethylene response protein 5 from Arabidopsis thaliana (Mouse-ear cress).